Here is a 362-residue protein sequence, read N- to C-terminus: UDP-N-acetylglucosamine--N-acetylmuramyl-(pentapeptide) pyrophosphoryl-undecaprenol N-acetylglucosamine transferase (362 aa).

Arg-166, Ser-196, and Gln-290 together coordinate UDP-N-acetyl-alpha-D-glucosamine.

It belongs to the glycosyltransferase 28 family. MurG subfamily.

The protein resides in the cell membrane. It catalyses the reaction Mur2Ac(oyl-L-Ala-gamma-D-Glu-L-Lys-D-Ala-D-Ala)-di-trans,octa-cis-undecaprenyl diphosphate + UDP-N-acetyl-alpha-D-glucosamine = beta-D-GlcNAc-(1-&gt;4)-Mur2Ac(oyl-L-Ala-gamma-D-Glu-L-Lys-D-Ala-D-Ala)-di-trans,octa-cis-undecaprenyl diphosphate + UDP + H(+). The protein operates within cell wall biogenesis; peptidoglycan biosynthesis. Cell wall formation. Catalyzes the transfer of a GlcNAc subunit on undecaprenyl-pyrophosphoryl-MurNAc-pentapeptide (lipid intermediate I) to form undecaprenyl-pyrophosphoryl-MurNAc-(pentapeptide)GlcNAc (lipid intermediate II). This chain is UDP-N-acetylglucosamine--N-acetylmuramyl-(pentapeptide) pyrophosphoryl-undecaprenol N-acetylglucosamine transferase, found in Staphylococcus carnosus (strain TM300).